A 366-amino-acid polypeptide reads, in one-letter code: N-acetyl-6-hydroxytryptophan oxidase ivoB (366 aa).

Positions 1–18 are cleaved as a signal peptide; that stretch reads MHLLSSLAALAAAITVAF. Residues Asn-28 and Asn-81 are each glycosylated (N-linked (GlcNAc...) asparagine). Cu cation-binding residues include His-87 and His-96. Residues Asn-114 and Asn-121 are each glycosylated (N-linked (GlcNAc...) asparagine). Cu cation is bound at residue His-291. A glycan (N-linked (GlcNAc...) asparagine) is linked at Asn-319.

It belongs to the tyrosinase family. The cofactor is Cu(2+).

Its pathway is pigment biosynthesis. With respect to regulation, activity is inhibited by 2,3-dihydroxynaphthalene, phenylhydrazine, diethyl dithiocarbamate and 8-hydroxyquinolene. Nonribosomal peptide synthetase; part of the pathway that mediates the biosynthesis of the gray-brown conidiophore pigment. The first step of the pathway is performed by the nonribosomal peptide synthetase ivoA that catalyzes ATP-dependent unidirectional stereoinversion of L-tryptophan to D-tryptophan with complete conversion. While the stereoinversion is catalyzed by the epimerization (E) domain of ivoA, the terminal condensation (C) domain stereoselectively hydrolyzes D-tryptophanyl-S-phosphopantetheine thioester and thus represents a non-canonical C domain function. D-tryptophan is acetylated, probably by an endogenous acetyltransferase. N-acetyltryptophan is further 6-hydroxylated into N-acetyl-6-hydroxytryptophan (AHT) by the cytochrome P450 monooxygenase ivoC. N-acetyl-6-hydroxytryptophan is substrate of the N-acetyl-6-hydroxytryptophan oxidase ivoB to produce the gray-brown conidiophore pigment. The sequence is that of N-acetyl-6-hydroxytryptophan oxidase ivoB from Emericella nidulans (strain FGSC A4 / ATCC 38163 / CBS 112.46 / NRRL 194 / M139) (Aspergillus nidulans).